Reading from the N-terminus, the 573-residue chain is Membrane protein insertase YidC (573 aa).

The helical transmembrane segment at 6–26 (VFLIFAWLMVAALLWMEWGKD) threads the bilayer. Residues 63–82 (PQAGSPAAVPATSTTTATPA) are disordered. Helical transmembrane passes span 355–375 (FSIM…LHSF), 379–399 (WGWA…PLSA), 446–466 (GGCL…WVLV), 488–508 (PYFI…KLTP), and 524–544 (PLVF…YWVV).

This sequence belongs to the OXA1/ALB3/YidC family. Type 1 subfamily. Interacts with the Sec translocase complex via SecD. Specifically interacts with transmembrane segments of nascent integral membrane proteins during membrane integration.

It localises to the cell inner membrane. Functionally, required for the insertion and/or proper folding and/or complex formation of integral membrane proteins into the membrane. Involved in integration of membrane proteins that insert both dependently and independently of the Sec translocase complex, as well as at least some lipoproteins. Aids folding of multispanning membrane proteins. This Xanthomonas campestris pv. campestris (strain 8004) protein is Membrane protein insertase YidC.